The primary structure comprises 96 residues: Co-chaperonin GroES (96 aa).

This sequence belongs to the GroES chaperonin family. Heptamer of 7 subunits arranged in a ring. Interacts with the chaperonin GroEL.

It is found in the cytoplasm. Functionally, together with the chaperonin GroEL, plays an essential role in assisting protein folding. The GroEL-GroES system forms a nano-cage that allows encapsulation of the non-native substrate proteins and provides a physical environment optimized to promote and accelerate protein folding. GroES binds to the apical surface of the GroEL ring, thereby capping the opening of the GroEL channel. The chain is Co-chaperonin GroES from Paracidovorax citrulli (strain AAC00-1) (Acidovorax citrulli).